We begin with the raw amino-acid sequence, 688 residues long: Glycine--tRNA ligase beta subunit (688 aa).

It belongs to the class-II aminoacyl-tRNA synthetase family. In terms of assembly, tetramer of two alpha and two beta subunits.

Its subcellular location is the cytoplasm. The enzyme catalyses tRNA(Gly) + glycine + ATP = glycyl-tRNA(Gly) + AMP + diphosphate. The protein is Glycine--tRNA ligase beta subunit of Chromohalobacter salexigens (strain ATCC BAA-138 / DSM 3043 / CIP 106854 / NCIMB 13768 / 1H11).